An 851-amino-acid polypeptide reads, in one-letter code: DNA mismatch repair protein MutS (851 aa).

An ATP-binding site is contributed by 602-609 (GPNMSGKS).

This sequence belongs to the DNA mismatch repair MutS family.

In terms of biological role, this protein is involved in the repair of mismatches in DNA. It is possible that it carries out the mismatch recognition step. This protein has a weak ATPase activity. The protein is DNA mismatch repair protein MutS of Streptococcus pyogenes serotype M2 (strain MGAS10270).